A 398-amino-acid chain; its full sequence is Phosphoglycerate kinase (398 aa).

Residues 21-23, Arg36, 59-62, Arg119, and Arg157 each bind substrate; these read DFN and HLGR. Residues Lys208, Gly296, Glu327, and 354 to 357 contribute to the ATP site; that span reads GGDS.

Belongs to the phosphoglycerate kinase family. Monomer.

It localises to the cytoplasm. It carries out the reaction (2R)-3-phosphoglycerate + ATP = (2R)-3-phospho-glyceroyl phosphate + ADP. It participates in carbohydrate degradation; glycolysis; pyruvate from D-glyceraldehyde 3-phosphate: step 2/5. The chain is Phosphoglycerate kinase from Lactococcus lactis subsp. cremoris (strain MG1363).